A 544-amino-acid chain; its full sequence is Membrane protein insertase YidC (544 aa).

The next 5 helical transmembrane spans lie at 15–35, 321–341, 343–363, 409–429, and 506–526; these read LFLI…MLSF, LWYL…DVIP, WGLS…PLTF, LGGC…YSLV, and MPIM…IYWI.

Belongs to the OXA1/ALB3/YidC family. Type 1 subfamily. In terms of assembly, interacts with the Sec translocase complex via SecD. Specifically interacts with transmembrane segments of nascent integral membrane proteins during membrane integration.

It localises to the cell inner membrane. Its function is as follows. Required for the insertion and/or proper folding and/or complex formation of integral membrane proteins into the membrane. Involved in integration of membrane proteins that insert both dependently and independently of the Sec translocase complex, as well as at least some lipoproteins. Aids folding of multispanning membrane proteins. This chain is Membrane protein insertase YidC, found in Borrelia garinii subsp. bavariensis (strain ATCC BAA-2496 / DSM 23469 / PBi) (Borreliella bavariensis).